The chain runs to 570 residues: Glycine--tRNA ligase (570 aa).

2 residues coordinate substrate: Arg-95 and Glu-159. Residues 191–193 (RNE), 201–206 (IRLREF), 312–313 (EV), and 426–429 (GLDR) each bind ATP. 206–210 (FNQAE) provides a ligand contact to substrate. 422–426 (EPSFG) contributes to the substrate binding site.

Belongs to the class-II aminoacyl-tRNA synthetase family.

It is found in the cytoplasm. It catalyses the reaction tRNA(Gly) + glycine + ATP = glycyl-tRNA(Gly) + AMP + diphosphate. Functionally, catalyzes the attachment of glycine to tRNA(Gly). This Archaeoglobus fulgidus (strain ATCC 49558 / DSM 4304 / JCM 9628 / NBRC 100126 / VC-16) protein is Glycine--tRNA ligase.